The sequence spans 279 residues: MRAAGQLLRACSQTWKSVRMASTGVERRKPLENKVALVTASTDGIGLAIARRLAQDGAHVVVSSRKQENVDRTVATLQGEGLSVTGTVCHVGKAEDRERLVAMAVNLHGGVDILVSNAAVNPFFGNIIDATEEVWDKILHVNVKATVLMTKAVVPEMEKRGGGSVLIVSSVGAYHPFPNLGPYNVSKTALLGLTKNLAVELAPRNIRVNCLAPGLIKTNFSQVLWMDKARKEYMKESLRIRRLGNPEDCAGIVSFLCSEDASYITGETVVVGGGTASRL.

37 to 61 serves as a coordination point for NADP(+); it reads LVTASTDGIGLAIARRLAQDGAHVV. An N6-acetyllysine; alternate modification is found at Lys-93. Lys-93 is modified (N6-succinyllysine; alternate). Ser-170 contributes to the substrate binding site. The active-site Proton acceptor is Tyr-183. Position 187 (Lys-187) interacts with NADP(+). The residue at position 217 (Lys-217) is an N6-acetyllysine; alternate. Lys-217 is subject to N6-succinyllysine; alternate. A Phosphoserine modification is found at Ser-221. N6-succinyllysine occurs at positions 228 and 235. The Peroxisomal targeting signal signature appears at 277–279; the sequence is SRL.

The protein belongs to the short-chain dehydrogenases/reductases (SDR) family. Homotetramer. As to expression, detected in heart, kidney, liver and small intestine. Detected at lower levels in brain, lung, stomach and spleen.

The protein resides in the peroxisome. It carries out the reaction a secondary alcohol + NADP(+) = a ketone + NADPH + H(+). The enzyme catalyses 3alpha-hydroxy-5beta-pregnan-20-one + NADP(+) = 5beta-pregnan-3,20-dione + NADPH + H(+). The catalysed reaction is 5beta-dihydrotestosterone + NADPH + H(+) = 5beta-androstane-3alpha,17beta-diol + NADP(+). It catalyses the reaction all-trans-retinol + NADP(+) = all-trans-retinal + NADPH + H(+). It carries out the reaction isatin + NADPH + H(+) = 3-hydroxyindolin-2-one + NADP(+). With respect to regulation, inhibited by kaempferol, quercetin, genistein and myristic acid. In terms of biological role, NADPH-dependent oxidoreductase which catalyzes the reduction of a variety of compounds bearing carbonyl groups including ketosteroids, alpha-dicarbonyl compounds, aldehydes, aromatic ketones and quinones. Reduces all-trans-retinal and 9-cis retinal. Reduces 3-ketosteroids and benzil into 3alpha-hydroxysteroids and S-benzoin, respectively, in contrast to the stereoselectivity of primates DHRS4s which produce 3beta-hydroxysteroids and R-benzoin. In the reverse reaction, catalyzes the NADP-dependent oxidation of 3alpha-hydroxysteroids and alcohol, but with much lower efficiency. Involved in the metabolism of 3alpha-hydroxysteroids, retinoid, isatin and xenobiotic carbonyl compounds. The protein is Dehydrogenase/reductase SDR family member 4 (DHRS4) of Sus scrofa (Pig).